We begin with the raw amino-acid sequence, 191 residues long: Vascular endothelial growth factor A (191 aa).

An N-terminal signal peptide occupies residues 1–26 (MNFLLTWIHWGLAALLYFHNAKVLQA). Intrachain disulfides connect Cys52–Cys94, Cys83–Cys128, and Cys87–Cys130. Asn101 carries an N-linked (GlcNAc...) asparagine glycan.

The protein belongs to the PDGF/VEGF growth factor family. As to quaternary structure, homodimer; disulfide-linked. Also found as heterodimer with PGF. Expressed by the venom gland, and probably other tissues.

It is found in the secreted. Its function is as follows. Growth factor active in angiogenesis, vasculogenesis and endothelial cell growth. Induces endothelial cell proliferation, promotes cell migration, inhibits apoptosis and induces permeabilization of blood vessels. Binds to heparan sulfate and heparin. The sequence is that of Vascular endothelial growth factor A from Bitis gabonica (Gaboon adder).